Here is a 94-residue protein sequence, read N- to C-terminus: Co-chaperonin GroES (94 aa).

Belongs to the GroES chaperonin family. Heptamer of 7 subunits arranged in a ring. Interacts with the chaperonin GroEL.

It is found in the cytoplasm. Together with the chaperonin GroEL, plays an essential role in assisting protein folding. The GroEL-GroES system forms a nano-cage that allows encapsulation of the non-native substrate proteins and provides a physical environment optimized to promote and accelerate protein folding. GroES binds to the apical surface of the GroEL ring, thereby capping the opening of the GroEL channel. In Enterococcus faecalis (strain ATCC 700802 / V583), this protein is Co-chaperonin GroES.